Here is a 37-residue protein sequence, read N- to C-terminus: Photosystem I reaction center subunit VIII (37 aa).

The chain crosses the membrane as a helical span at residues 10–30; it reads IFVPLVGLVFPAIAMASLSLY.

Belongs to the PsaI family.

Its subcellular location is the plastid. The protein localises to the chloroplast thylakoid membrane. In terms of biological role, may help in the organization of the PsaL subunit. The protein is Photosystem I reaction center subunit VIII of Gossypium barbadense (Sea Island cotton).